The sequence spans 239 residues: Phosphoribosylaminoimidazole-succinocarboxamide synthase (239 aa).

Belongs to the SAICAR synthetase family.

It catalyses the reaction 5-amino-1-(5-phospho-D-ribosyl)imidazole-4-carboxylate + L-aspartate + ATP = (2S)-2-[5-amino-1-(5-phospho-beta-D-ribosyl)imidazole-4-carboxamido]succinate + ADP + phosphate + 2 H(+). It functions in the pathway purine metabolism; IMP biosynthesis via de novo pathway; 5-amino-1-(5-phospho-D-ribosyl)imidazole-4-carboxamide from 5-amino-1-(5-phospho-D-ribosyl)imidazole-4-carboxylate: step 1/2. The sequence is that of Phosphoribosylaminoimidazole-succinocarboxamide synthase from Campylobacter hominis (strain ATCC BAA-381 / DSM 21671 / CCUG 45161 / LMG 19568 / NCTC 13146 / CH001A).